A 291-amino-acid polypeptide reads, in one-letter code: NAD kinase (291 aa).

Asp-73 serves as the catalytic Proton acceptor. NAD(+)-binding positions include 73–74 (DG), 147–148 (ND), Arg-175, Asp-177, 188–193 (TAYALS), Ala-212, and Gln-246.

The protein belongs to the NAD kinase family. The cofactor is a divalent metal cation.

It is found in the cytoplasm. The enzyme catalyses NAD(+) + ATP = ADP + NADP(+) + H(+). Involved in the regulation of the intracellular balance of NAD and NADP, and is a key enzyme in the biosynthesis of NADP. Catalyzes specifically the phosphorylation on 2'-hydroxyl of the adenosine moiety of NAD to yield NADP. The polypeptide is NAD kinase (Polaromonas sp. (strain JS666 / ATCC BAA-500)).